Here is a 233-residue protein sequence, read N- to C-terminus: Riboflavin kinase (233 aa).

The interval 1–99 (MSGATSTGDV…YRRIFEDPGE (99 aa)) is unknown. The segment at 100 to 233 (LALAGTVTSG…DDEVTIRVEA (134 aa)) is riboflavin kinase. Position 109 to 114 (109 to 114 (GMGEGR)) interacts with CDP. Mg(2+) is bound by residues Thr138 and Asn140. Thr200 and Glu208 together coordinate FMN. CDP is bound at residue 213–216 (VKLR).

The protein belongs to the archaeal riboflavin kinase family. Requires Mg(2+) as cofactor.

It catalyses the reaction riboflavin + CTP = CDP + FMN + H(+). Its pathway is cofactor biosynthesis; FMN biosynthesis; FMN from riboflavin (CTP route): step 1/1. Catalyzes the CTP-dependent phosphorylation of riboflavin (vitamin B2) to form flavin mononucleotide (FMN). This is Riboflavin kinase (ribK) from Halobacterium salinarum (strain ATCC 700922 / JCM 11081 / NRC-1) (Halobacterium halobium).